Consider the following 433-residue polypeptide: Pyroglutamylated RF-amide peptide receptor (433 aa).

Topologically, residues 1 to 46 (MQALNITAEQFSRLLSAHNLTREQFIHRYGLRPLVYTPELPARAKV) are extracellular. 2 N-linked (GlcNAc...) asparagine glycosylation sites follow: Asn-5 and Asn-19. The chain crosses the membrane as a helical span at residues 47 to 67 (AFALAGALIFALALFGNSLVI). At 68 to 81 (YVVTRSKAMRTVTN) the chain is on the cytoplasmic side. A helical membrane pass occupies residues 82 to 102 (IFICSLALSDLLIAFFCIPVT). The Extracellular portion of the chain corresponds to 103–120 (MLQNISDKWLGGAFICKM). The chain crosses the membrane as a helical span at residues 121-141 (VPFVQSTAVVTEILTMTCIAV). The Cytoplasmic segment spans residues 142–162 (ERHQGLVHPFKMKWQYTTRRA). A helical membrane pass occupies residues 163-183 (FTILGVVWLAAIIVGSPMWHV). Residues 184-212 (QRLEIKYDFLYEKEHICCLEEWASPVHQR) lie on the Extracellular side of the membrane. A helical transmembrane segment spans residues 213-233 (IYSTFILVILFLLPLVVMLVL). The Cytoplasmic segment spans residues 234 to 271 (YSKIGYELWIKKRVGDSSALQTIHGKEMSKIARKKKRA). Residues 272–292 (VIMMVTVVALFAACWAPFHVV) traverse the membrane as a helical segment. Residues 293-313 (HMMVEYSNFEKEYDDVTIKMV) are Extracellular-facing. A helical membrane pass occupies residues 314-334 (FAVAQTIGFFNSICNPFVYAF). At 335–433 (MNENFKKNFL…NSTFGSGHEL (99 aa)) the chain is on the cytoplasmic side. The tract at residues 356–389 (SSPARKPGNSGISMMQKRAKLSRPQRPVEETKGD) is disordered.

Belongs to the G-protein coupled receptor 1 family. In terms of tissue distribution, highly expressed in the adrenal gland and at moderate levels in the eye and testis. Expressed widely in the brain with high levels in the hypothalamus and moderate levels in the amygdala, basal forebrain, cortex, medulla oblongata, midbrain and thalamus.

The protein localises to the cell membrane. Functionally, receptor for the orexigenic neuropeptide QRFP. The activity of this receptor is mediated by G proteins that modulate adenylate cyclase activity and intracellular calcium levels. The chain is Pyroglutamylated RF-amide peptide receptor (Qrfpr) from Rattus norvegicus (Rat).